Here is a 167-residue protein sequence, read N- to C-terminus: Urease accessory protein UreE (167 aa).

The segment at 137–158 (EAGAYQSAPHGHSHSHAHGHDH) is disordered.

It belongs to the UreE family.

Its subcellular location is the cytoplasm. Its function is as follows. Involved in urease metallocenter assembly. Binds nickel. Probably functions as a nickel donor during metallocenter assembly. The sequence is that of Urease accessory protein UreE from Pseudomonas putida (strain ATCC 700007 / DSM 6899 / JCM 31910 / BCRC 17059 / LMG 24140 / F1).